Here is a 167-residue protein sequence, read N- to C-terminus: Arginine repressor (167 aa).

Belongs to the ArgR family.

Its subcellular location is the cytoplasm. It functions in the pathway amino-acid biosynthesis; L-arginine biosynthesis [regulation]. In terms of biological role, regulates arginine biosynthesis genes. This chain is Arginine repressor, found in Mycobacterium leprae (strain Br4923).